Here is a 247-residue protein sequence, read N- to C-terminus: MKIDVIISADYIDSEALKGKIAVVIDMLRATSVITTALYNGAKKVIPVVSVEEAFEKAKELKSLGEEVLLGGERKALKIDGFDFSNSPLEYKREIVEGKNVIMSTTNGTRALNLCSKADKVIVASVLNGQAVAKYLENEEKEIVFVNSGTNGEFSSDDFMCAGYIISELCKNKEVELTDIAKTAKYVYESSEGIEEFIKDAKHYNILKNLGLEEDLKYCSTKNLIDLVFEFKNGEIKTVESGIKVKI.

The protein belongs to the ComB family. Mg(2+) is required as a cofactor.

The enzyme catalyses (2R)-O-phospho-3-sulfolactate + H2O = (2R)-3-sulfolactate + phosphate. The chain is Probable 2-phosphosulfolactate phosphatase from Clostridium perfringens (strain SM101 / Type A).